Consider the following 268-residue polypeptide: 4-hydroxy-tetrahydrodipicolinate reductase (268 aa).

Residue 9–14 (GCSGRM) coordinates NAD(+). Residue R36 participates in NADP(+) binding. NAD(+) is bound by residues 98 to 100 (GTT) and 122 to 125 (APNT). H155 serves as the catalytic Proton donor/acceptor. H156 contacts (S)-2,3,4,5-tetrahydrodipicolinate. The active-site Proton donor is the K159. 165–166 (GT) contributes to the (S)-2,3,4,5-tetrahydrodipicolinate binding site.

It belongs to the DapB family.

It localises to the cytoplasm. The enzyme catalyses (S)-2,3,4,5-tetrahydrodipicolinate + NAD(+) + H2O = (2S,4S)-4-hydroxy-2,3,4,5-tetrahydrodipicolinate + NADH + H(+). It carries out the reaction (S)-2,3,4,5-tetrahydrodipicolinate + NADP(+) + H2O = (2S,4S)-4-hydroxy-2,3,4,5-tetrahydrodipicolinate + NADPH + H(+). It functions in the pathway amino-acid biosynthesis; L-lysine biosynthesis via DAP pathway; (S)-tetrahydrodipicolinate from L-aspartate: step 4/4. In terms of biological role, catalyzes the conversion of 4-hydroxy-tetrahydrodipicolinate (HTPA) to tetrahydrodipicolinate. This chain is 4-hydroxy-tetrahydrodipicolinate reductase, found in Colwellia psychrerythraea (strain 34H / ATCC BAA-681) (Vibrio psychroerythus).